The sequence spans 440 residues: NADH-quinone oxidoreductase subunit D (440 aa).

Belongs to the complex I 49 kDa subunit family. As to quaternary structure, NDH-1 is composed of 14 different subunits. Subunits NuoB, C, D, E, F, and G constitute the peripheral sector of the complex.

It is found in the cell membrane. The catalysed reaction is a quinone + NADH + 5 H(+)(in) = a quinol + NAD(+) + 4 H(+)(out). In terms of biological role, NDH-1 shuttles electrons from NADH, via FMN and iron-sulfur (Fe-S) centers, to quinones in the respiratory chain. The immediate electron acceptor for the enzyme in this species is believed to be a menaquinone. Couples the redox reaction to proton translocation (for every two electrons transferred, four hydrogen ions are translocated across the cytoplasmic membrane), and thus conserves the redox energy in a proton gradient. The chain is NADH-quinone oxidoreductase subunit D from Acidothermus cellulolyticus (strain ATCC 43068 / DSM 8971 / 11B).